The sequence spans 127 residues: Aspartate 1-decarboxylase (127 aa).

Ser25 acts as the Schiff-base intermediate with substrate; via pyruvic acid in catalysis. Ser25 carries the post-translational modification Pyruvic acid (Ser). Thr57 contributes to the substrate binding site. Tyr58 (proton donor) is an active-site residue. Substrate is bound at residue 73-75; sequence GAA.

It belongs to the PanD family. As to quaternary structure, heterooctamer of four alpha and four beta subunits. Pyruvate is required as a cofactor. Is synthesized initially as an inactive proenzyme, which is activated by self-cleavage at a specific serine bond to produce a beta-subunit with a hydroxyl group at its C-terminus and an alpha-subunit with a pyruvoyl group at its N-terminus.

It is found in the cytoplasm. It carries out the reaction L-aspartate + H(+) = beta-alanine + CO2. The protein operates within cofactor biosynthesis; (R)-pantothenate biosynthesis; beta-alanine from L-aspartate: step 1/1. Functionally, catalyzes the pyruvoyl-dependent decarboxylation of aspartate to produce beta-alanine. This Bacillus cereus (strain ATCC 10987 / NRS 248) protein is Aspartate 1-decarboxylase.